Consider the following 382-residue polypeptide: O-methyltransferase okaF (382 aa).

Residues Glu249 and Arg287 each coordinate S-adenosyl-L-methionine. His291 (proton acceptor) is an active-site residue.

Belongs to the class I-like SAM-binding methyltransferase superfamily. Cation-independent O-methyltransferase family.

The enzyme catalyses 3-desmethyl okaramine B + S-adenosyl-L-methionine = okaramine B + S-adenosyl-L-homocysteine + H(+). The protein operates within alkaloid biosynthesis. In terms of biological role, O-methyltransferase; part of the gene cluster that mediates the biosynthesis of okaramine B, a prenylated indole alkaloid that possesses an unusual octacyclic ring system, including a four-membered azetidine ring and an eight-membered azocine ring, and that exhibits insecticidal activity against silkworm larvae. Within the pathway, okaF catalyzes the last step which is the methylation of 3-desmethyl okaramine B to produce okaramine B. With okaG, OkaF is also able to produce okaramine D from okaramine E. The biosynthesis begins with the NRPS okaA that condenses two tryptophan molecules into cyclo(L-Trp-L-Trp). Prenylation by the prenyltransferase okaC then leads to the formation of cyclo(N8-(alpha,alpha-dimethylallyl)-L-Trp-6a-(alpha,alpha-dime-thylallyl)-L-Trp). This is followed by indole 2,3-epoxidation by the FAD-dependent monooxygenase okaB to facilitate the formation of the hexahydropyrrolo[2,3-b]indole (HPI) moiety of okaramine C. The cytochrome P450 monooxygenase okaD then likely catalyzes formation of the eight-membered ring of okaramine A. The dioxygenase okaE further forms the unusual 2-dimethyl-3-methyl-azetidine ring to yield 12-deshydroxyl okaramine E, as well as the hydroxylation of 12-deshydroxyl okaramine E to produce okaramine E. The cytochrome P450 monoxygenase okaG converts 12-deshydroxyl okaramine E into 3-desmethyl okaramine B which is further methylated by the methyltransferase okaF into okaramine B. In a shunt pathway, okaG and okaF together are also able to convert okaramine E into okaramine D. Okaramine H is produced by nonenzymatic conversion from okaramine A. The sequence is that of O-methyltransferase okaF from Penicillium ochrochloron.